A 104-amino-acid chain; its full sequence is Small ribosomal subunit protein uS10 (104 aa).

This sequence belongs to the universal ribosomal protein uS10 family. In terms of assembly, part of the 30S ribosomal subunit.

In terms of biological role, involved in the binding of tRNA to the ribosomes. In Variovorax paradoxus (strain S110), this protein is Small ribosomal subunit protein uS10.